The sequence spans 612 residues: Elongation factor 4 (612 aa).

The 183-residue stretch at 11 to 193 (KHIRNFSIIA…RIVTDVPAPS (183 aa)) folds into the tr-type G domain. GTP-binding positions include 23 to 28 (DHGKST) and 140 to 143 (NKVD).

This sequence belongs to the TRAFAC class translation factor GTPase superfamily. Classic translation factor GTPase family. LepA subfamily.

Its subcellular location is the cell membrane. The catalysed reaction is GTP + H2O = GDP + phosphate + H(+). Its function is as follows. Required for accurate and efficient protein synthesis under certain stress conditions. May act as a fidelity factor of the translation reaction, by catalyzing a one-codon backward translocation of tRNAs on improperly translocated ribosomes. Back-translocation proceeds from a post-translocation (POST) complex to a pre-translocation (PRE) complex, thus giving elongation factor G a second chance to translocate the tRNAs correctly. Binds to ribosomes in a GTP-dependent manner. The protein is Elongation factor 4 of Lacticaseibacillus paracasei (strain ATCC 334 / BCRC 17002 / CCUG 31169 / CIP 107868 / KCTC 3260 / NRRL B-441) (Lactobacillus paracasei).